A 120-amino-acid polypeptide reads, in one-letter code: Response regulator receiver protein CpdR (120 aa).

The Response regulatory domain maps to 3-117 (RILLAEDDND…DLVNEIEKML (115 aa)). Position 52 is a 4-aspartylphosphate (Asp-52).

Post-translationally, is phosphorylated by ChpT-P on Asp-52.

It localises to the cytoplasm. In terms of biological role, component of a regulatory phosphorelay system that controls B.abortus cell growth, division, and intracellular survival inside mammalian host cells. This signaling pathway is composed of CckA, ChpT, CtrA and CpdR. CpdR is a response regulator substrate of ChpT. Unphosphorylated CpdR controls steady-state levels of CtrA in the B.abortus cell, likely via CtrA destabilization and activation of its proteolysis. This Brucella abortus (strain 2308) protein is Response regulator receiver protein CpdR.